A 137-amino-acid polypeptide reads, in one-letter code: Probable 4-amino-4-deoxy-L-arabinose-phosphoundecaprenol flippase subunit ArnF (137 aa).

Residues M1–R5 are Cytoplasmic-facing. A helical membrane pass occupies residues G6–W26. The Periplasmic portion of the chain corresponds to S27–A49. Residues A50–L70 form a helical membrane-spanning segment. Residues A71–A80 are Cytoplasmic-facing. Residues Y81 to F101 form a helical membrane-spanning segment. A topological domain (periplasmic) is located at residue N102. The helical transmembrane segment at E103–I123 threads the bilayer. Residues N124–P137 lie on the Cytoplasmic side of the membrane.

The protein belongs to the ArnF family. In terms of assembly, heterodimer of ArnE and ArnF.

It is found in the cell inner membrane. The protein operates within bacterial outer membrane biogenesis; lipopolysaccharide biosynthesis. Functionally, translocates 4-amino-4-deoxy-L-arabinose-phosphoundecaprenol (alpha-L-Ara4N-phosphoundecaprenol) from the cytoplasmic to the periplasmic side of the inner membrane. The chain is Probable 4-amino-4-deoxy-L-arabinose-phosphoundecaprenol flippase subunit ArnF from Pseudomonas fluorescens (strain ATCC BAA-477 / NRRL B-23932 / Pf-5).